Consider the following 671-residue polypeptide: ABC transporter ATP-binding protein/permease wht-1 (671 aa).

Residues 1 to 408 (MHKAPISTLI…SWLTVIRDPN (408 aa)) lie on the Cytoplasmic side of the membrane. The 247-residue stretch at 64–310 (TNFVDRFRNN…FEKCGYPCPA (247 aa)) folds into the ABC transporter domain. 100 to 107 (GSSGAGKT) contributes to the ATP binding site. A helical transmembrane segment spans residues 409 to 429 (LLSVRLLQILITAFITGIVFF). Topologically, residues 430–451 (QTPVTPATIISINGIMFNHIRN) are extracellular. Residues 452-472 (MNFMLQFPNVPVITAELPIVL) form a helical membrane-spanning segment. The Cytoplasmic portion of the chain corresponds to 473–497 (RENANGVYRTSAYFLAKNIAELPQY). Residues 498-518 (IILPILYNTIVYWMSGLYPNF) form a helical membrane-spanning segment. Residues 519-525 (WNYCFAS) lie on the Extracellular side of the membrane. The chain crosses the membrane as a helical span at residues 526 to 546 (LVTILITNVAISISYAVATIF). Residues 547–550 (ANTD) are Cytoplasmic-facing. A helical membrane pass occupies residues 551 to 571 (VAMTILPIFVVPIMAFGGFFI). The Extracellular portion of the chain corresponds to 572–644 (TFDAIPSYFK…DFSASHKIFD (73 aa)). The chain crosses the membrane as a helical span at residues 645–665 (ISILFGMFIGIRIIAYVALLI). Over 666-671 (RSYNNT) the chain is Cytoplasmic.

It belongs to the ABC transporter superfamily. ABCG family. Eye pigment precursor importer (TC 3.A.1.204) subfamily. In terms of tissue distribution, expressed in the intestine in both larvae and adults. Expressed in the gut of males.

Its subcellular location is the membrane. In terms of biological role, required for efficient RNA interference (RNAi). Plays a role in germline development. In Caenorhabditis elegans, this protein is ABC transporter ATP-binding protein/permease wht-1.